We begin with the raw amino-acid sequence, 94 residues long: MFQVNEYFNGTVKSIAFAGEEGPATVGVMAPGEYEFGTAKREIMHVVSGALTVKLPGSDNWETFNAGDKFNVAADSKFQLKVKVDTAYLCEYRD.

Belongs to the nucleoside phosphorylase PpnP family.

It catalyses the reaction a purine D-ribonucleoside + phosphate = a purine nucleobase + alpha-D-ribose 1-phosphate. It carries out the reaction adenosine + phosphate = alpha-D-ribose 1-phosphate + adenine. The catalysed reaction is cytidine + phosphate = cytosine + alpha-D-ribose 1-phosphate. The enzyme catalyses guanosine + phosphate = alpha-D-ribose 1-phosphate + guanine. It catalyses the reaction inosine + phosphate = alpha-D-ribose 1-phosphate + hypoxanthine. It carries out the reaction thymidine + phosphate = 2-deoxy-alpha-D-ribose 1-phosphate + thymine. The catalysed reaction is uridine + phosphate = alpha-D-ribose 1-phosphate + uracil. The enzyme catalyses xanthosine + phosphate = alpha-D-ribose 1-phosphate + xanthine. In terms of biological role, catalyzes the phosphorolysis of diverse nucleosides, yielding D-ribose 1-phosphate and the respective free bases. Can use uridine, adenosine, guanosine, cytidine, thymidine, inosine and xanthosine as substrates. Also catalyzes the reverse reactions. The polypeptide is Pyrimidine/purine nucleoside phosphorylase (Pseudomonas putida (strain GB-1)).